Reading from the N-terminus, the 231-residue chain is Orotidine 5'-phosphate decarboxylase (231 aa).

Substrate contacts are provided by residues Asp-11, Lys-33, Asp-60–Thr-69, Thr-117, Arg-178, Gln-187, Gly-207, and Arg-208. The active-site Proton donor is Lys-62.

Belongs to the OMP decarboxylase family. Type 1 subfamily. Homodimer.

The enzyme catalyses orotidine 5'-phosphate + H(+) = UMP + CO2. It functions in the pathway pyrimidine metabolism; UMP biosynthesis via de novo pathway; UMP from orotate: step 2/2. Its function is as follows. Catalyzes the decarboxylation of orotidine 5'-monophosphate (OMP) to uridine 5'-monophosphate (UMP). The chain is Orotidine 5'-phosphate decarboxylase from Nitrosomonas europaea (strain ATCC 19718 / CIP 103999 / KCTC 2705 / NBRC 14298).